We begin with the raw amino-acid sequence, 1475 residues long: Peroxidasin homolog (1475 aa).

Residues 1-23 form the signal peptide; it reads MAVRPTRRCLLALLLCFAWWAMA. One can recognise an LRRNT domain in the interval 24–60; sequence VVASKQGAGCPSRCLCFRTTVRCMHLLLEAVPAVAPQ. 2 disulfides stabilise this stretch: C33/C39 and C37/C46. LRR repeat units lie at residues 58 to 81, 82 to 105, 107 to 129, 130 to 153, 154 to 177, and 179 to 201; these read APQT…AFRR, LRSL…AFED, ENLK…AFKG, LASL…SFQH, LPKL…TFSQ, and ESMK…LWLA. The region spanning 189-241 is the LRRCT domain; sequence NALHCDCEILWLADLLKTYAQSGNAQAAATCEYPRRIQGRSVATITPEELNCE. 6 cysteine pairs are disulfide-bonded: C193/C240, C195/C219, C264/C314, C360/C409, C451/C499, and C543/C591. 4 Ig-like C2-type domains span residues 243 to 329, 339 to 425, 430 to 517, and 518 to 607; these read PRIT…QEVT, PTFV…AFII, PQFT…LTVQ, and PRVT…MVLS. Residue N387 is glycosylated (N-linked (GlcNAc...) asparagine). An LRR 7 repeat occupies 402-425; sequence SDSGEYTCFASNSVDSIHATAFII. 4 N-linked (GlcNAc...) asparagine glycosylation sites follow: N637, N696, N716, and N728. Disulfide bonds link C720–C882, C729–C745, C844–C854, and C848–C872. Residue D823 participates in heme b binding. The active-site Proton acceptor is H824. A Ca(2+)-binding site is contributed by D825. Ca(2+) contacts are provided by T904, Y906, D908, and S910. The cysteines at positions 956 and 967 are disulfide-linked. A glycan (N-linked (GlcNAc...) asparagine) is linked at N961. Heme b-binding residues include E977 and H1071. An LRR 8 repeat occupies 1148-1172; it reads ALDLAAINIQRGRDHGIPPYHDYRV. Y1173 bears the Phosphotyrosine mark. 2 disulfide bridges follow: C1174-C1231 and C1272-C1298. An N-linked (GlcNAc...) asparagine glycan is attached at N1175. The residue at position 1177 (S1177) is a Phosphoserine. Residues 1267-1288 form an LRR 9 repeat; sequence LARILCDNSDNITRVQQDVFRV. N-linked (GlcNAc...) asparagine glycosylation is found at N1277 and N1364. The required in homotrimerization stretch occupies residues 1312–1407; the sequence is CCEDCRTRGQ…QINSLESRLS (96 aa). The 59-residue stretch at 1409 to 1467 folds into the VWFC domain; the sequence is TECVDDSGESHGGNTKWKKDPCTVCECKNGQITCFVEACQPAACPQPVKVEGACCPVCL.

It belongs to the peroxidase family. XPO subfamily. Homotrimer; disulfide-linked. The homotrimer form is predominant. Homooligomer; disulfide-linked. Oligomerization occurs intracellularly before C-terminal proteolytic cleavage. Interacts with PXDNL; this interaction inhibits the peroxidase activity of PXDN. The cofactor is Ca(2+). It depends on heme b as a cofactor. Processed by FURIN and the proteolytic processing largely depends on the peroxidase activity of PXDN. The proteolytic cleavage occurs after intracellular homotrimerization and releases into the extracellular matrix a large, catalytically active fragment and a smaller fragment consisting primarily of the C-terminal VWFC domain. The processing enhances both peroxidase activity and sulfilimine cross-links formation. Highly expressed in the cardiovascular system. In the embryo, expressed in the corneal epithelial layer. In the adult eyes, expressed in the corneal and lens epithelium. Expressed in lung.

The protein resides in the secreted. Its subcellular location is the extracellular space. The protein localises to the extracellular matrix. It is found in the endoplasmic reticulum. It localises to the cell surface. The protein resides in the basement membrane. It carries out the reaction L-lysyl-[collagen] + L-methionyl-[collagen] + H2O2 = [collagen]-L-lysyl-N-S-L-methionyl-[collagen] + 2 H2O + H(+). It catalyses the reaction bromide + H2O2 = hypobromite + H2O. The catalysed reaction is L-lysyl-[collagen] + L-methionyl-[collagen] + hypobromite = [collagen]-L-lysyl-N-S-L-methionyl-[collagen] + bromide + H2O + H(+). The enzyme catalyses (5R)-5-hydroxy-L-lysyl-[collagen] + L-methionyl-[collagen] + hypobromite = [collagen]-(5R)-5-hydroxy-L-lysyl-N-S-L-methionyl-[collagen] + bromide + H2O + H(+). It carries out the reaction (5R)-5-hydroxy-L-lysyl-[collagen] + L-methionyl-[collagen] + H2O2 = [collagen]-(5R)-5-hydroxy-L-lysyl-N-S-L-methionyl-[collagen] + 2 H2O + H(+). It catalyses the reaction L-tyrosyl-[protein] + bromide + H2O2 + H(+) = 3-bromo-L-tyrosyl-[protein] + 2 H2O. The catalysed reaction is hypobromite + L-tyrosyl-[protein] + H(+) = 3-bromo-L-tyrosyl-[protein] + H2O. Its activity is regulated as follows. Thiocyanate inhibits the formation of 3-bromotyrosine. Catalyzes the two-electron oxidation of bromide by hydrogen peroxide and generates hypobromite as a reactive intermediate which mediates the formation of sulfilimine cross-links between methionine and hydroxylysine residues within an uncross-linked collagen IV/COL4A1 NC1 hexamer. In turns, directly contributes to the collagen IV network-dependent fibronectin/FN and laminin assembly, which is required for full extracellular matrix (ECM)-mediated signaling. Thus, sulfilimine cross-links are essential for growth factor-induced cell proliferation and survival in endothelial cells, an event essential to basement membrane integrity. In addition, through the bromide oxidation, may promote tubulogenesis and induce angiogenesis through ERK1/2, Akt, and FAK pathways. Moreover brominates alpha2 collagen IV chain/COL4A2 at 'Tyr-1480' and leads to bromine enrichment of the basement membranes. In vitro, can also catalyze the two-electron oxidation of thiocyanate and iodide and these two substrates could effectively compete with bromide and thus inhibit the formation of sulfilimine bonds. Binds laminins. May play a role in the organization of eyeball structure and lens development during eye development. This Mus musculus (Mouse) protein is Peroxidasin homolog.